The chain runs to 221 residues: Vacuolar protein sorting-associated protein 20 (221 aa).

The N-myristoyl glycine moiety is linked to residue glycine 2. Residues 72-178 (QEHLLQQASD…LNPEKMNNAK (107 aa)) adopt a coiled-coil conformation. The tract at residues 170-221 (NPEKMNNAKVANMPSTEGLPSLPQGEQTEQKEREEFATEERSDTKEPLALLS) is disordered. The span at 197 to 215 (TEQKEREEFATEERSDTKE) shows a compositional bias: basic and acidic residues.

Belongs to the SNF7 family. As to quaternary structure, core component of the ESCRT-III complex (endosomal sorting required for transport complex III). ESCRT-III appears to be sequentially assembled as a flat lattice on the endosome membrane and forms a transient 450 kDa complex that contains DID4, oligomerized SNF7, VPS20 and VPS24. SNF7 oligomerization into a membrane-associated filament is nucleated by association of SNF7 with VPS20; the process is terminated through association of VPS24, possibly by capping the SNF7 filament. VPS24 subsequently associates with DID4/VPS2. Interacts with the VPS4. Interacts with VPS25; the interaction mediates the association with the ESCRT-II complex.

It is found in the endosome membrane. The protein localises to the vacuole membrane. Its function is as follows. Class E VPS protein implicated in concentration and sorting of cargo proteins of the multivesicular body (MVB) for incorporation into intralumenal vesicles. The lumenal sequestrated membrane proteins will be targeted into the vacuole after fusion of the endosome with the vacuole. Acts a component of the ESCRT-III complex, which appears to be critical for late steps in MVB sorting, such as membrane invagination and final cargo sorting and recruitment of late-acting components of the sorting machinery. The MVB pathway requires the sequential function of ESCRT-O, -I,-II and -III complex assemblies. Required for the oligomerization of SNF7 into a membrane-associated filament. The VPS20-SNF7 subcomplex is responsible for the membrane association of the ESCRT-III complex. Also required for the RIM101 repressor proteolytic activation. The sequence is that of Vacuolar protein sorting-associated protein 20 (VPS20) from Saccharomyces cerevisiae (strain ATCC 204508 / S288c) (Baker's yeast).